We begin with the raw amino-acid sequence, 166 residues long: Phosphopantetheine adenylyltransferase (166 aa).

Position 11 (serine 11) interacts with substrate. Residues 11 to 12 and histidine 19 contribute to the ATP site; that span reads SF. Substrate-binding residues include lysine 43, leucine 75, and arginine 89. Residues 90–92, glutamate 100, and 125–131 each bind ATP; these read GLR and YGYLSSS.

The protein belongs to the bacterial CoaD family. In terms of assembly, homohexamer. Mg(2+) serves as cofactor.

The protein resides in the cytoplasm. The catalysed reaction is (R)-4'-phosphopantetheine + ATP + H(+) = 3'-dephospho-CoA + diphosphate. It functions in the pathway cofactor biosynthesis; coenzyme A biosynthesis; CoA from (R)-pantothenate: step 4/5. Functionally, reversibly transfers an adenylyl group from ATP to 4'-phosphopantetheine, yielding dephospho-CoA (dPCoA) and pyrophosphate. The protein is Phosphopantetheine adenylyltransferase of Syntrophotalea carbinolica (strain DSM 2380 / NBRC 103641 / GraBd1) (Pelobacter carbinolicus).